Consider the following 573-residue polypeptide: Urease subunit alpha 2 (573 aa).

A Urease domain is found at 136-573 (GAIDAHVHLI…LPMAQRYFLF (438 aa)). The Ni(2+) site is built by histidine 141, histidine 143, and lysine 224. Lysine 224 is subject to N6-carboxylysine. Histidine 226 is a substrate binding site. The Ni(2+) site is built by histidine 253 and histidine 279. Histidine 327 serves as the catalytic Proton donor. Position 367 (aspartate 367) interacts with Ni(2+).

The protein belongs to the metallo-dependent hydrolases superfamily. Urease alpha subunit family. In terms of assembly, may form a heterohexamer of 3 UreC (alpha) and 3 UreAB (gamma/beta) subunits. May also form a heterotrimer of UreA (gamma), UreB (beta) and UreC (alpha) subunits. Three heterotrimers associate to form the active enzyme. Ni cation serves as cofactor. Carboxylation allows a single lysine to coordinate two nickel ions.

It is found in the cytoplasm. It carries out the reaction urea + 2 H2O + H(+) = hydrogencarbonate + 2 NH4(+). Its pathway is nitrogen metabolism; urea degradation; CO(2) and NH(3) from urea (urease route): step 1/1. This Streptomyces avermitilis (strain ATCC 31267 / DSM 46492 / JCM 5070 / NBRC 14893 / NCIMB 12804 / NRRL 8165 / MA-4680) protein is Urease subunit alpha 2.